The chain runs to 585 residues: RNA polymerase sigma factor RpoD (585 aa).

The tract at residues 67 to 93 (PASTLVPKDDSKPARKKKESSASTSGS) is disordered. Residues 351–421 (LVKANLRLVV…TRAISDQART (71 aa)) are sigma-70 factor domain-2. Positions 375–378 (DLIQ) match the Interaction with polymerase core subunit RpoC motif. The segment at 430 to 506 (EQVNKVIRET…DTEVETPVNA (77 aa)) is sigma-70 factor domain-3. Residues 519-572 (VLHTLPAREQKVIRMRFGLDDGYPQTLEEVGYQFKVTRERIRQIEAKALRRLRH) form a sigma-70 factor domain-4 region. Positions 545–564 (LEEVGYQFKVTRERIRQIEA) form a DNA-binding region, H-T-H motif.

It belongs to the sigma-70 factor family. RpoD/SigA subfamily. In terms of assembly, interacts transiently with the RNA polymerase catalytic core.

The protein localises to the cytoplasm. Functionally, sigma factors are initiation factors that promote the attachment of RNA polymerase to specific initiation sites and are then released. This sigma factor is the primary sigma factor during exponential growth. The polypeptide is RNA polymerase sigma factor RpoD (Leptospira interrogans serogroup Icterohaemorrhagiae serovar copenhageni (strain Fiocruz L1-130)).